The primary structure comprises 411 residues: Putative ion-transport protein YfeO (411 aa).

11 helical membrane passes run 9-29 (MLLL…VLIA), 54-74 (DSPF…GLII), 99-119 (ALPG…SLGP), 149-169 (ILAS…AALI), 186-206 (LFAP…FFHP), 223-243 (IASG…AVWC), 258-278 (VLIL…GGPL), 296-316 (LGAG…VIAA), 322-342 (GGRI…LHAH), 343-363 (VEAV…VLVV), and 386-406 (LLCI…LLAA).

This sequence belongs to the chloride channel (TC 2.A.49) family.

It localises to the cell membrane. In Salmonella choleraesuis (strain SC-B67), this protein is Putative ion-transport protein YfeO.